The primary structure comprises 712 residues: Polyribonucleotide nucleotidyltransferase (712 aa).

The Mg(2+) site is built by Asp-487 and Asp-493. Positions 554-613 constitute a KH domain; sequence PKIITMTINPDKIRDVIGPSGKQINKIIEETGVKIDIEQDGTVFISSINQEMNDKAKKII. The S1 motif domain maps to 623-691; it reads GEIYEGKVKR…KQGRVNLSRK (69 aa).

The protein belongs to the polyribonucleotide nucleotidyltransferase family. It depends on Mg(2+) as a cofactor.

It is found in the cytoplasm. It catalyses the reaction RNA(n+1) + phosphate = RNA(n) + a ribonucleoside 5'-diphosphate. Its function is as follows. Involved in mRNA degradation. Catalyzes the phosphorolysis of single-stranded polyribonucleotides processively in the 3'- to 5'-direction. In Bacillus cereus (strain AH820), this protein is Polyribonucleotide nucleotidyltransferase.